Here is a 235-residue protein sequence, read N- to C-terminus: uncharacterized protein (235 aa).

Helical transmembrane passes span 167 to 187 (AFKL…LNEL) and 190 to 210 (LFAY…LLLW).

The protein localises to the membrane. This is an uncharacterized protein from Saccharomyces cerevisiae (strain ATCC 204508 / S288c) (Baker's yeast).